The primary structure comprises 153 residues: Ribonuclease 2 (153 aa).

It belongs to the BetVI family.

The protein resides in the cytoplasm. Catalyzes the two-stage endonucleolytic cleavage to 3'-phosphomononucleotides and 3'-phosphooligonucleotides with 2',3'-cyclic phosphate intermediates. This is Ribonuclease 2 from Panax ginseng (Korean ginseng).